The chain runs to 139 residues: Bilirubin-inducible fluorescent protein UnaG (139 aa).

(4Z,15Z)-bilirubin IXalpha-binding positions include Asn-57, Thr-61, Ser-80, Arg-112, and 132 to 134; that span reads RSY.

It belongs to the calycin superfamily. Fatty-acid binding protein (FABP) family. As to quaternary structure, monomer. In terms of tissue distribution, detected in small-diameter muscle fibers from the white muscle layer from juvenile animals (glass eels) (at protein level). Detected in small-diameter muscle fibers from juvenile animals (glass eels).

It is found in the cytoplasm. Functionally, beta-barrel protein that binds unconjugated bilirubin with high affinity. Excitation of the bilirubin-bound protein gives rise to green fluorescence, both under normoxia and hypoxia. The apoprotein is not fluorescent. Does not emit fluorescence in the presence of ditauro-bilirubin, urobilin or biliverdin. In Anguilla japonica (Japanese eel), this protein is Bilirubin-inducible fluorescent protein UnaG.